Reading from the N-terminus, the 94-residue chain is Large ribosomal subunit protein bL27 (94 aa).

The segment at 1 to 25 (MAHKKGTGSTRNGRDSQSKRLGVKR) is disordered.

This sequence belongs to the bacterial ribosomal protein bL27 family.

In Gloeothece citriformis (strain PCC 7424) (Cyanothece sp. (strain PCC 7424)), this protein is Large ribosomal subunit protein bL27.